Reading from the N-terminus, the 261-residue chain is Neurovirulence factor ICP34.5 (261 aa).

Residues 1–17 show a composition bias toward basic residues; it reads MSRRRGPRRRGPRRRPR. The segment at 1 to 19 is required for nucleolar localization; the sequence is MSRRRGPRRRGPRRRPRPG. Disordered regions lie at residues 1-59, 75-135, and 145-164; these read MSRR…SAPA, DSDD…LALR, and RLSL…APRG. 4 consecutive repeats follow at residues 3 to 7, 8 to 12, 16 to 23, and 24 to 31; these read RRRGP and PRPGAPAV. The interval 3–12 is 2 X 5 AA tandem repeats of R-R-R-G-P; it reads RRRGPRRRGP. The 2 X 8 AA tandem repeats of P-R-P-G-A-P-A-V stretch occupies residues 16-31; it reads PRPGAPAVPRPGAPAV. Residues 18-32 are compositionally biased toward pro residues; the sequence is PGAPAVPRPGAPAVP. Acidic residues predominate over residues 75 to 88; the sequence is DSDDADYAGNDDAE. Over residues 101 to 111 the composition is skewed to low complexity; the sequence is APEAPHAAPAA. The Nuclear export signal signature appears at 128-137; that stretch reads LPPHLALRLR. Positions 163-176 are binding to PP1CA; sequence RGKVCFSPRVQVRH. Positions 163–176 are interaction with host PPP1CA; it reads RGKVCFSPRVQVRH. Residues 178–261 are important for interferon resistance; it reads VAWETAARLA…AAAGPGRRAV (84 aa). Positions 188–206 match the Bipartite nuclear localization signal motif; sequence RRGSWARERADRDRFRRRV. The interaction with host EIF2S1/EIF-2ALPHA stretch occupies residues 206–221; the sequence is VAAAEAVIGPCLEPEA. A disordered region spans residues 223-261; the sequence is ARARARARAHEDGGPAEEEEAAAAARGSSAAAGPGRRAV. A compositionally biased stretch (low complexity) spans 244–261; sequence AAAARGSSAAAGPGRRAV.

It belongs to the PPP1R15 family. Interacts with host PPP1CA to form a high-molecular-weight complex that dephosphorylates EIF2S1/eIF-2alpha. Interacts with host EIF2S1/eIF-2alpha; this interaction is crucial for the specific dephosphorylation of EIF2S1/eIF-2alpha by PPP1CA.

It is found in the host cytoplasm. Its subcellular location is the host nucleus. It localises to the host nucleolus. The protein resides in the virion. Its function is as follows. Plays essential roles in viral nuclear egress to mediate capsid transit across the nuclear membrane and also in the inhibition of host immune response and integrated stress response (ISR). Facilitates nuclear egress cooperatively with host C1QBP and protein kinase C/PKC to induce lamin A/C phosphorylation and subsequent reorganization. In turn, lamina disassembles and nuclear egress occurs. Recruits the serine/threonine-protein phosphatase PPP1CA/PP1-alpha to dephosphorylate the translation initiation factor EIF2S1/eIF-2alpha, thereby couteracting the host shutoff of protein synthesis involving double-stranded RNA-dependent protein kinase EIF2AK2/PKR. Also down-modulates the host MHC class II proteins cell surface expression. Acts as a neurovirulence factor that has a profound effect on the growth of the virus in central nervous system tissue, probably through its ability to maintain an environment favorable for viral replication. This is Neurovirulence factor ICP34.5 (RL1) from Human herpesvirus 2 (strain HG52) (HHV-2).